We begin with the raw amino-acid sequence, 200 residues long: NADH-quinone oxidoreductase subunit C (200 aa).

This sequence belongs to the complex I 30 kDa subunit family. NDH-1 is composed of 14 different subunits. Subunits NuoB, C, D, E, F, and G constitute the peripheral sector of the complex.

It is found in the cell inner membrane. It catalyses the reaction a quinone + NADH + 5 H(+)(in) = a quinol + NAD(+) + 4 H(+)(out). In terms of biological role, NDH-1 shuttles electrons from NADH, via FMN and iron-sulfur (Fe-S) centers, to quinones in the respiratory chain. The immediate electron acceptor for the enzyme in this species is believed to be ubiquinone. Couples the redox reaction to proton translocation (for every two electrons transferred, four hydrogen ions are translocated across the cytoplasmic membrane), and thus conserves the redox energy in a proton gradient. In Ruegeria pomeroyi (strain ATCC 700808 / DSM 15171 / DSS-3) (Silicibacter pomeroyi), this protein is NADH-quinone oxidoreductase subunit C.